The following is a 262-amino-acid chain: Zinc-finger homeodomain protein 6 (262 aa).

Composition is skewed to basic and acidic residues over residues 1–25 and 36–47; these read MEVREKKDEKMEMTRRKSSALDHHR and NKEKPTTKRNGS. The disordered stretch occupies residues 1–93; sequence MEVREKKDEK…ECQKNHAASS (93 aa). The ZF-HD dimerization-type; degenerate zinc finger occupies 82-131; sequence YRECQKNHAASSGGHVVDGCGEFMSSGEEGTVESLLCAACDCHRSFHRKE. The segment at residues 198–261 is a DNA-binding region (homeobox); that stretch reads KKRFRTKFNE…NNKQAAKKKD (64 aa).

In terms of assembly, homo- and heterodimer with other ZFHD proteins. Interacts with MIF1 and MIF3; these interactions prevent nuclear localization and DNA-binding to inhibit transcription regulation activity. Binds to ZHD1, ZHD2, ZHD10 and ZHD11. As to expression, expressed in seedlings, roots, leaves, stems, flowers and inflorescence.

Its subcellular location is the nucleus. In terms of biological role, putative transcription factor. The chain is Zinc-finger homeodomain protein 6 (ZHD6) from Arabidopsis thaliana (Mouse-ear cress).